The sequence spans 301 residues: Mitochondrial import receptor subunit TOM40 homolog (301 aa).

The span at 1–19 (MATPTESELASPIPQTNPG) shows a compositional bias: polar residues. The tract at residues 1 to 20 (MATPTESELASPIPQTNPGS) is disordered.

The protein belongs to the Tom40 family. As to quaternary structure, forms part of the preprotein translocase complex of the outer mitochondrial membrane (TOM complex). Interacts with mitochondrial targeting sequences. In terms of tissue distribution, ubiquitously expressed, but highly expressed in the pharyngeal muscles, the nerve ring, the intestine, gonadal sheath and in the tail hypodermis.

It is found in the mitochondrion outer membrane. Its function is as follows. Channel-forming protein essential for import of protein precursors into mitochondria. Specifically required for nnt-1 accumulation in the mitochondria and may be involved in the secretion of daf-28/insulin from the mitochondria. Required for embryonic and larval development. This Caenorhabditis elegans protein is Mitochondrial import receptor subunit TOM40 homolog.